The sequence spans 622 residues: Low affinity potassium transport system protein Kup (622 aa).

The next 12 membrane-spanning stretches (helical) occupy residues 9 to 29 (LSAV…TSPL), 46 to 66 (PDVV…VVSV), 101 to 121 (ILVV…VITP), 137 to 157 (PALD…LFVI), 165 to 185 (VGKL…LLGL), 213 to 233 (VSFF…ALYA), 247 to 267 (WFTV…ALLL), 276 to 296 (PFFL…ATLA), 337 to 357 (IYIP…IIGF), 363 to 383 (LAAA…ILFC), 395 to 415 (FLVA…FSAN), and 416 to 436 (VLKL…MFII).

Belongs to the HAK/KUP transporter (TC 2.A.72) family.

The protein resides in the cell inner membrane. The enzyme catalyses K(+)(in) + H(+)(in) = K(+)(out) + H(+)(out). In terms of biological role, responsible for the low-affinity transport of potassium into the cell. Likely operates as a K(+):H(+) symporter. This is Low affinity potassium transport system protein Kup from Yersinia pseudotuberculosis serotype O:1b (strain IP 31758).